The primary structure comprises 536 residues: Heparanase (536 aa).

The N-terminal stretch at 1-28 (MLRPLLLLWLWGRLGALTQGTPAGTAPT) is a signal peptide. Heparan sulfate group-binding positions include 55 to 57 (DAS) and Thr-90. Residues 103–150 (PTSEERSYWQSQDNNDICGSERVSADVLRKLQMEWPFQELLLLREQYQ) constitute a propeptide, linker peptide. Cys-120 and Cys-172 form a disulfide bridge. 151-155 (REFKN) contributes to the heparan sulfate group binding site. Residues Asn-155, Asn-193, and Asn-210 are each glycosylated (N-linked (GlcNAc...) asparagine). Residue Glu-218 is the Proton donor of the active site. Residues 263–273 (QPRGKTVKLLR), His-289, and Arg-296 contribute to the heparan sulfate group site. Residues 281-410 (EVIDSLTWHH…LLFKKLVGPK (130 aa)) form a required for heterodimerization with the heparanase 8 kDa subunit region. Glu-336 acts as the Nucleophile in catalysis. Heparan sulfate group contacts are provided by residues 341-343 (YGG) and 382-384 (GNY). Cys-430 and Cys-535 are disulfide-bonded. Asn-452 is a glycosylation site (N-linked (GlcNAc...) asparagine). The tract at residues 520–536 (FSYGFFVIRNAKIAACI) is required for transferring proheparanase to the Golgi apparatus, secretion and subsequent enzyme activity and for enhancement of PKB/AKT1 phosphorylation.

It belongs to the glycosyl hydrolase 79 family. As to quaternary structure, heterodimer; heterodimer formation between the 8 kDa and the 50 kDa subunits is required for enzyme activity. Interacts with TF; the interaction, inhibited by heparin, enhances the generation of activated factor X and activates coagulation. Interacts with HRG; the interaction is enhanced at acidic pH, partially inhibits binding of HPSE to cell surface receptors and modulates its enzymatic activity. Interacts with SDC1; the interaction enhances the shedding of SDC1. Interacts with HPSE2. In terms of processing, proteolytically processed. The cleavage of the 65 kDa form leads to the generation of a linker peptide, and the 8 kDa and 50 kDa products. The active form, the 8/50 kDa heterodimer, is resistant to degradation. Complete removal of the linker peptide appears to be a prerequisite to the complete activation of the enzyme. Post-translationally, N-glycosylated. Glycosylation of the 50 kDa subunit appears to be essential for its solubility.

The protein localises to the lysosome membrane. It is found in the secreted. The protein resides in the nucleus. It catalyses the reaction endohydrolysis of (1-&gt;4)-beta-D-glycosidic bonds of heparan sulfate chains in heparan sulfate proteoglycan.. With respect to regulation, inhibited by laminarin sulfate and, to a lower extent, by heparin and sulfamin. Activated by calcium and magnesium. Inhibited by EDTA. Endoglycosidase that cleaves heparan sulfate proteoglycans (HSPGs) into heparan sulfate side chains and core proteoglycans. Participates in extracellular matrix (ECM) degradation and remodeling. Selectively cleaves the linkage between a glucuronic acid unit and an N-sulfo glucosamine unit carrying either a 3-O-sulfo or a 6-O-sulfo group. Can also cleave the linkage between a glucuronic acid unit and an N-sulfo glucosamine unit carrying a 2-O-sulfo group, but not linkages between a glucuronic acid unit and a 2-O-sulfated iduronic acid moiety. It is essentially inactive at neutral pH but becomes active under acidic conditions such as during tumor invasion and in inflammatory processes. Facilitates cell migration associated with metastasis, wound healing and inflammation. Enhances shedding of syndecans, and increases endothelial invasion and angiogenesis in myelomas. Acts as a procoagulant by increasing the generation of activation factor X in the presence of tissue factor and activation factor VII. Increases cell adhesion to the extracellular matrix (ECM), independent of its enzymatic activity. Induces AKT1/PKB phosphorylation via lipid rafts increasing cell mobility and invasion. Heparin increases this AKT1/PKB activation. Regulates osteogenesis. Enhances angiogenesis through up-regulation of SRC-mediated activation of VEGF. Implicated in hair follicle inner root sheath differentiation and hair homeostasis. This Rattus norvegicus (Rat) protein is Heparanase (Hpse).